The chain runs to 955 residues: 2-oxoglutarate dehydrogenase E1 component (955 aa).

Belongs to the alpha-ketoglutarate dehydrogenase family. As to quaternary structure, homodimer. Part of the 2-oxoglutarate dehydrogenase (OGDH) complex composed of E1 (2-oxoglutarate dehydrogenase), E2 (dihydrolipoamide succinyltransferase) and E3 (dihydrolipoamide dehydrogenase); the complex contains multiple copies of the three enzymatic components (E1, E2 and E3). It depends on thiamine diphosphate as a cofactor.

The enzyme catalyses N(6)-[(R)-lipoyl]-L-lysyl-[protein] + 2-oxoglutarate + H(+) = N(6)-[(R)-S(8)-succinyldihydrolipoyl]-L-lysyl-[protein] + CO2. In terms of biological role, E1 component of the 2-oxoglutarate dehydrogenase (OGDH) complex which catalyzes the decarboxylation of 2-oxoglutarate, the first step in the conversion of 2-oxoglutarate to succinyl-CoA and CO(2). This is 2-oxoglutarate dehydrogenase E1 component from Bacillus cereus (strain 03BB102).